We begin with the raw amino-acid sequence, 174 residues long: NAD(P)H-quinone oxidoreductase subunit J (174 aa).

It belongs to the complex I 30 kDa subunit family. As to quaternary structure, NDH-1 can be composed of about 15 different subunits; different subcomplexes with different compositions have been identified which probably have different functions.

Its subcellular location is the cellular thylakoid membrane. The enzyme catalyses a plastoquinone + NADH + (n+1) H(+)(in) = a plastoquinol + NAD(+) + n H(+)(out). The catalysed reaction is a plastoquinone + NADPH + (n+1) H(+)(in) = a plastoquinol + NADP(+) + n H(+)(out). In terms of biological role, NDH-1 shuttles electrons from an unknown electron donor, via FMN and iron-sulfur (Fe-S) centers, to quinones in the respiratory and/or the photosynthetic chain. The immediate electron acceptor for the enzyme in this species is believed to be plastoquinone. Couples the redox reaction to proton translocation, and thus conserves the redox energy in a proton gradient. Cyanobacterial NDH-1 also plays a role in inorganic carbon-concentration. The chain is NAD(P)H-quinone oxidoreductase subunit J from Picosynechococcus sp. (strain ATCC 27264 / PCC 7002 / PR-6) (Agmenellum quadruplicatum).